A 297-amino-acid polypeptide reads, in one-letter code: Dipicolinate synthase subunit A (297 aa).

NADP(+) contacts are provided by residues 164-165, Arg-185, Thr-203, 242-244, and 264-267; these read RT, LAS, and APGL.

As to quaternary structure, dipicolinate synthase likely consists of DpaA and DpaB, since both proteins are required for DPA synthesis.

The catalysed reaction is (S)-2,3-dihydrodipicolinate + NADP(+) = dipicolinate + NADPH + H(+). Its function is as follows. Together with DpaB, catalyzes the conversion of dihydrodipicolinate to dipicolinate (DPA), which constitutes up to 10% of the dry weight of the spore. This chain is Dipicolinate synthase subunit A (dpaA), found in Bacillus subtilis (strain 168).